The following is a 323-amino-acid chain: Methionyl-tRNA formyltransferase (323 aa).

(6S)-5,6,7,8-tetrahydrofolate is bound at residue 121–124; that stretch reads SLLP.

This sequence belongs to the Fmt family.

It catalyses the reaction L-methionyl-tRNA(fMet) + (6R)-10-formyltetrahydrofolate = N-formyl-L-methionyl-tRNA(fMet) + (6S)-5,6,7,8-tetrahydrofolate + H(+). Its function is as follows. Attaches a formyl group to the free amino group of methionyl-tRNA(fMet). The formyl group appears to play a dual role in the initiator identity of N-formylmethionyl-tRNA by promoting its recognition by IF2 and preventing the misappropriation of this tRNA by the elongation apparatus. The polypeptide is Methionyl-tRNA formyltransferase (Desulfotalea psychrophila (strain LSv54 / DSM 12343)).